Here is a 462-residue protein sequence, read N- to C-terminus: Asparagine--tRNA ligase (462 aa).

This sequence belongs to the class-II aminoacyl-tRNA synthetase family. Homodimer.

It localises to the cytoplasm. The catalysed reaction is tRNA(Asn) + L-asparagine + ATP = L-asparaginyl-tRNA(Asn) + AMP + diphosphate + H(+). The sequence is that of Asparagine--tRNA ligase from Borreliella burgdorferi (strain ATCC 35210 / DSM 4680 / CIP 102532 / B31) (Borrelia burgdorferi).